The chain runs to 627 residues: Anti-CBASS protein Acb1 (627 aa).

Position 105 (Y105) interacts with 3',3'-cGAMP. Y105 is a binding site for 3',3'-cUAMP. The disordered stretch occupies residues 437-474 (LADQPETESANENTEQPESGEEGEEGQPTRRAANDAKP). Residues H508, T510, H584, and T586 contribute to the active site. 3',3'-cGAMP-binding residues include E614 and W620. 3',3'-cUAMP contacts are provided by E614 and W620.

This sequence belongs to the anti-CBASS protein Acb1 family.

The catalysed reaction is 3',3'-cUAMP + H2O = U[3'-5']pAp[3'] + H(+). It catalyses the reaction 3',3',3'-c-tri-AMP + H2O = A[3'-5']pA[3'-5']pAp[3'] + H(+). The enzyme catalyses 3',3',3'-cAAG + H2O = G[3'-5']pA[3'-5']pAp[3'] + H(+). It carries out the reaction 3',3',3'-cAAG + H2O = A[3'-5']pG[3'-5']pAp[3'] + H(+). The catalysed reaction is 3',3'-cGAMP + H2O = G[3'-5']pAp[3'] + H(+). Its function is as follows. Counteracts or regulates the endogenous CBASS antiviral defense system. Phosphodiesterase that enables metal-independent hydrolysis of the host cyclic di- and trinucleotide CBASS signals such as 3'3'-cGAMP, 3'3'cUA, and 3'3'3'-cAAA. The polypeptide is Anti-CBASS protein Acb1 (Caulobacter sp. (strain RHG1)).